A 154-amino-acid chain; its full sequence is Sec-independent protein translocase protein TatB (154 aa).

The chain crosses the membrane as a helical span at residues 1-21 (MIDIGITKLAIIGGIALIVIG).

This sequence belongs to the TatB family. As to quaternary structure, the Tat system comprises two distinct complexes: a TatABC complex, containing multiple copies of TatA, TatB and TatC subunits, and a separate TatA complex, containing only TatA subunits. Substrates initially bind to the TatABC complex, which probably triggers association of the separate TatA complex to form the active translocon.

The protein resides in the cell inner membrane. Part of the twin-arginine translocation (Tat) system that transports large folded proteins containing a characteristic twin-arginine motif in their signal peptide across membranes. Together with TatC, TatB is part of a receptor directly interacting with Tat signal peptides. TatB may form an oligomeric binding site that transiently accommodates folded Tat precursor proteins before their translocation. The protein is Sec-independent protein translocase protein TatB of Albidiferax ferrireducens (strain ATCC BAA-621 / DSM 15236 / T118) (Rhodoferax ferrireducens).